The chain runs to 164 residues: Protein-export protein SecB (164 aa).

The protein belongs to the SecB family. As to quaternary structure, homotetramer, a dimer of dimers. One homotetramer interacts with 1 SecA dimer.

It is found in the cytoplasm. Its function is as follows. One of the proteins required for the normal export of preproteins out of the cell cytoplasm. It is a molecular chaperone that binds to a subset of precursor proteins, maintaining them in a translocation-competent state. It also specifically binds to its receptor SecA. The chain is Protein-export protein SecB from Shewanella denitrificans (strain OS217 / ATCC BAA-1090 / DSM 15013).